The sequence spans 121 residues: DNA-directed RNA polymerase subunit Rpo8 (121 aa).

This sequence belongs to the archaeal Rpo8 RNA polymerase subunit family. As to quaternary structure, part of the 13-subunit RNA polymerase complex. This subunit is phosphorylated.

The protein localises to the cytoplasm. It catalyses the reaction RNA(n) + a ribonucleoside 5'-triphosphate = RNA(n+1) + diphosphate. Its function is as follows. DNA-dependent RNA polymerase (RNAP) catalyzes the transcription of DNA into RNA using the four ribonucleoside triphosphates as substrates. The chain is DNA-directed RNA polymerase subunit Rpo8 from Sulfolobus acidocaldarius (strain ATCC 33909 / DSM 639 / JCM 8929 / NBRC 15157 / NCIMB 11770).